The following is a 422-amino-acid chain: Lipoyl synthase, mitochondrial (422 aa).

Residues 1–34 constitute a mitochondrion transit peptide; the sequence is MAASSTRLRCLYASSAPAWKKSPSQSIISLSRHY. Over residues 37–48 the composition is skewed to polar residues; it reads TSSTTPSLNPDE. The segment at 37-70 is disordered; the sequence is TSSTTPSLNPDESSSSSSSTIPKRRKTTTFRDKL. 7 residues coordinate [4Fe-4S] cluster: Cys146, Cys151, Cys157, Cys177, Cys181, Cys184, and Ser383. The 213-residue stretch at 160-372 folds into the Radical SAM core domain; the sequence is GSDKSAATAT…RQRALEMGFL (213 aa).

The protein belongs to the radical SAM superfamily. Lipoyl synthase family. [4Fe-4S] cluster serves as cofactor.

The protein localises to the mitochondrion. It catalyses the reaction [[Fe-S] cluster scaffold protein carrying a second [4Fe-4S](2+) cluster] + N(6)-octanoyl-L-lysyl-[protein] + 2 oxidized [2Fe-2S]-[ferredoxin] + 2 S-adenosyl-L-methionine + 4 H(+) = [[Fe-S] cluster scaffold protein] + N(6)-[(R)-dihydrolipoyl]-L-lysyl-[protein] + 4 Fe(3+) + 2 hydrogen sulfide + 2 5'-deoxyadenosine + 2 L-methionine + 2 reduced [2Fe-2S]-[ferredoxin]. The protein operates within protein modification; protein lipoylation via endogenous pathway; protein N(6)-(lipoyl)lysine from octanoyl-[acyl-carrier-protein]: step 2/2. Its function is as follows. Catalyzes the radical-mediated insertion of two sulfur atoms into the C-6 and C-8 positions of the octanoyl moiety bound to the lipoyl domains of lipoate-dependent enzymes, thereby converting the octanoylated domains into lipoylated derivatives. This chain is Lipoyl synthase, mitochondrial, found in Talaromyces stipitatus (strain ATCC 10500 / CBS 375.48 / QM 6759 / NRRL 1006) (Penicillium stipitatum).